Reading from the N-terminus, the 76-residue chain is Short coiled-coil protein B (76 aa).

The stretch at 6 to 52 (ENQVELEEKTRLINQVLELQNTLEDLSARVDAVKEENLKLKSENQVL) forms a coiled coil.

The protein belongs to the SCOC family.

It localises to the golgi apparatus membrane. The protein localises to the golgi apparatus. It is found in the trans-Golgi network. The protein resides in the cytoplasm. Its subcellular location is the cytosol. Positive regulator of amino acid starvation-induced autophagy. The protein is Short coiled-coil protein B (scocb) of Danio rerio (Zebrafish).